Reading from the N-terminus, the 422-residue chain is Glycine amidinotransferase, mitochondrial (422 aa).

The transit peptide at 1-37 (MLRVRCVRGGSRGAEAVHYIGSMLRKGFVGWVQRSFQ) directs the protein to the mitochondrion. Residues Asp-253 and His-302 contribute to the active site. Cys-406 acts as the Amidino-cysteine intermediate in catalysis.

The protein belongs to the amidinotransferase family. As to quaternary structure, homodimer.

Its subcellular location is the mitochondrion inner membrane. The enzyme catalyses L-arginine + glycine = guanidinoacetate + L-ornithine. It functions in the pathway amine and polyamine biosynthesis; creatine biosynthesis; creatine from L-arginine and glycine: step 1/2. Catalyzes the biosynthesis of guanidinoacetate, the immediate precursor of creatine. Creatine plays a vital role in energy metabolism in muscle tissues. May play a role in embryonic and central nervous system development. This Xenopus tropicalis (Western clawed frog) protein is Glycine amidinotransferase, mitochondrial.